The primary structure comprises 464 residues: MLSLRSVLKHCLSAKKTCSRNISALYITGDKANENYVTLQPYMDFNKTFGERQFLEQSISSRGLDIRLETVLSKYEKYKTHHAQLSKVAEERERVTKRLKELTKSGSSAVQLEELKEHGKSLRNELKALKQTLYPIEDDFIHDYLHLPNLLHVQCPVGGEEKLLYRHGIPKSENKTTSHLARQELVHFVDNNRYYLMEQAALFDVNAMQSLARYFVNHGHFIQTANPDFVRCVLLEANATPLSDYHLVQEEHLQNKINTAYLTGGASFESYLGAMTKLCVYPSVLPLRYVCCGRSYNRAEADLYGPIPSLYTATQTNAVQIFVATQTDNEADSQLEHILNLATDFYKALDIPFRISYATAADLTPAESIRAVIEVYAPSLQRYVCVGRISNYGDFVSKRILFSTRREKHYDFLHMVGGPVLYTSRLIAALVEHGVRLEDCKLLGSISQKPVHQQDLQQFKDLFT.

This sequence belongs to the class-II aminoacyl-tRNA synthetase family. Type-1 seryl-tRNA synthetase subfamily.

The protein resides in the mitochondrion. In terms of biological role, essential protein which may play a role in mitochondrial morphogenesis and function. Has transfer RNA (tRNA)-binding activity and can bind tRNA(Ser) but does not have serine--tRNA ligase activity and does not bind ATP. The sequence is that of Serine--tRNA synthetase-like protein Slimp from Drosophila melanogaster (Fruit fly).